Here is a 430-residue protein sequence, read N- to C-terminus: Tyrosine--tRNA ligase (430 aa).

Y32 contacts L-tyrosine. Residues 37-46 (PTADSLHIGH) carry the 'HIGH' region motif. L-tyrosine-binding residues include Y172 and Q176. A 'KMSKS' region motif is present at residues 232-236 (KFGKT). K235 serves as a coordination point for ATP. The region spanning 362-429 (VKAVDLFVDN…GKKNYYLIIA (68 aa)) is the S4 RNA-binding domain.

Belongs to the class-I aminoacyl-tRNA synthetase family. TyrS type 1 subfamily. As to quaternary structure, homodimer.

It is found in the cytoplasm. It catalyses the reaction tRNA(Tyr) + L-tyrosine + ATP = L-tyrosyl-tRNA(Tyr) + AMP + diphosphate + H(+). Functionally, catalyzes the attachment of tyrosine to tRNA(Tyr) in a two-step reaction: tyrosine is first activated by ATP to form Tyr-AMP and then transferred to the acceptor end of tRNA(Tyr). This is Tyrosine--tRNA ligase from Bacteroides fragilis (strain YCH46).